A 133-amino-acid chain; its full sequence is Large ribosomal subunit protein uL15 (133 aa).

Residues 1–58 form a disordered region; that stretch reads MALQNLTPAPGSTHATKRLGRGQGSGNGKTAGKGNKGQRARKGYNEKRGFEGGQQPLQ. Residues 21–35 are compositionally biased toward gly residues; sequence RGQGSGNGKTAGKGN.

Belongs to the universal ribosomal protein uL15 family. As to quaternary structure, part of the 50S ribosomal subunit.

In terms of biological role, binds to the 23S rRNA. In Campylobacter curvus (strain 525.92), this protein is Large ribosomal subunit protein uL15.